Consider the following 132-residue polypeptide: Small ribosomal subunit protein uS9 (132 aa).

This sequence belongs to the universal ribosomal protein uS9 family.

This chain is Small ribosomal subunit protein uS9, found in Baumannia cicadellinicola subsp. Homalodisca coagulata.